Reading from the N-terminus, the 347-residue chain is Ribosomal RNA large subunit methyltransferase M (347 aa).

Residues Ser-184, 217–220, Asp-236, Asp-256, and Asp-272 each bind S-adenosyl-L-methionine; that span reads APGG. Lys-301 (proton acceptor) is an active-site residue.

This sequence belongs to the class I-like SAM-binding methyltransferase superfamily. RNA methyltransferase RlmE family. RlmM subfamily. As to quaternary structure, monomer.

The protein localises to the cytoplasm. It catalyses the reaction cytidine(2498) in 23S rRNA + S-adenosyl-L-methionine = 2'-O-methylcytidine(2498) in 23S rRNA + S-adenosyl-L-homocysteine + H(+). In terms of biological role, catalyzes the 2'-O-methylation at nucleotide C2498 in 23S rRNA. The polypeptide is Ribosomal RNA large subunit methyltransferase M (Xanthomonas oryzae pv. oryzae (strain KACC10331 / KXO85)).